A 639-amino-acid polypeptide reads, in one-letter code: Developmental regulatory protein wetA (639 aa).

Disordered regions lie at residues 65–97, 206–369, 418–552, and 587–613; these read MDPS…EFDF, TTMR…SAAS, GLLI…SADE, and LMTG…RRRR. Residues 69–78 are compositionally biased toward basic residues; that stretch reads HHHHHPHHHA. Composition is skewed to polar residues over residues 81–90 and 214–226; these read ESSTTSSGVS and VSQT…SPSM. Residues 246 to 255 show a composition bias toward basic residues; sequence RGRRAHRAHT. Low complexity-rich tracts occupy residues 256–275, 346–369, and 506–526; these read QHAL…QAHQ, QQQW…SAAS, and HSSG…RVSV.

This sequence belongs to the wetA family.

Functionally, brlA, abaA and wetA are pivotal regulators of conidiophore development and conidium maturation. They act individually and together to regulate their own expression and that of numerous other sporulation-specific genes. Acts as a crucial regulator of both conidiation capacity and conidial quality. Plays a role in virulence. The chain is Developmental regulatory protein wetA from Beauveria bassiana (strain ARSEF 2860) (White muscardine disease fungus).